Here is a 215-residue protein sequence, read N- to C-terminus: DNA repair and recombination protein RadB (215 aa).

It belongs to the eukaryotic RecA-like protein family. RadB subfamily.

Functionally, involved in DNA repair and in homologous recombination. May regulate the cleavage reactions of the branch-structured DNA. Has a very weak ATPase activity that is not stimulated by DNA. Binds DNA but does not promote DNA strands exchange. This is DNA repair and recombination protein RadB from Methanococcus maripaludis (strain C7 / ATCC BAA-1331).